A 285-amino-acid chain; its full sequence is Bifunctional protein FolD (285 aa).

NADP(+)-binding positions include 166–168 (GRS), Ser-191, and Thr-232.

It belongs to the tetrahydrofolate dehydrogenase/cyclohydrolase family. Homodimer.

The enzyme catalyses (6R)-5,10-methylene-5,6,7,8-tetrahydrofolate + NADP(+) = (6R)-5,10-methenyltetrahydrofolate + NADPH. The catalysed reaction is (6R)-5,10-methenyltetrahydrofolate + H2O = (6R)-10-formyltetrahydrofolate + H(+). It participates in one-carbon metabolism; tetrahydrofolate interconversion. In terms of biological role, catalyzes the oxidation of 5,10-methylenetetrahydrofolate to 5,10-methenyltetrahydrofolate and then the hydrolysis of 5,10-methenyltetrahydrofolate to 10-formyltetrahydrofolate. The protein is Bifunctional protein FolD of Chloroflexus aggregans (strain MD-66 / DSM 9485).